The primary structure comprises 240 residues: Zinc import ATP-binding protein ZnuC (240 aa).

The ABC transporter domain occupies 1 to 219; the sequence is MSLLSIAALD…PAYRAMFGLD (219 aa). 36–43 serves as a coordination point for ATP; the sequence is GPNGSGKT.

It belongs to the ABC transporter superfamily. Zinc importer (TC 3.A.1.15.5) family. As to quaternary structure, the complex is composed of two ATP-binding proteins (ZnuC), two transmembrane proteins (ZnuB) and a solute-binding protein (ZnuA).

Its subcellular location is the cell inner membrane. It catalyses the reaction Zn(2+)(out) + ATP(in) + H2O(in) = Zn(2+)(in) + ADP(in) + phosphate(in) + H(+)(in). Its function is as follows. Part of the ABC transporter complex ZnuABC involved in zinc import. Responsible for energy coupling to the transport system. This is Zinc import ATP-binding protein ZnuC from Chromohalobacter salexigens (strain ATCC BAA-138 / DSM 3043 / CIP 106854 / NCIMB 13768 / 1H11).